Consider the following 365-residue polypeptide: MLKRTPLFPVYARYGAKTVEFGGWEMPVQFSSIKEEHNAVRTRAGLFDVSHMGEIIVRGGGSLPFLQKLMTNDVAKLRPGRVQYTLMCDESAGTVDDLLIYQKGEDDYLLVVNAANTEKDFAWLSEHADGDVELEDVSAETALLALQGPAAERVLQKLTDMDLSALRPFSFQDGVEVASVKTLVSRTGYTGEDGFELYCQAEDAITLWEAILTAGAEDGVLPCGLGARDTLRFEACLPLYGQELSATISPLEAGLGFAVKTEKEPPFIGQAVLKQQKEAGPPRRLVGIEMIDKGIPRHGYRVFAAGEEAGFVTTGTQSPTLKKNIGLALVKAEVAAIGQEVEVDIRGKRLKATIVPTPFYKRAKS.

It belongs to the GcvT family. As to quaternary structure, the glycine cleavage system is composed of four proteins: P, T, L and H.

The catalysed reaction is N(6)-[(R)-S(8)-aminomethyldihydrolipoyl]-L-lysyl-[protein] + (6S)-5,6,7,8-tetrahydrofolate = N(6)-[(R)-dihydrolipoyl]-L-lysyl-[protein] + (6R)-5,10-methylene-5,6,7,8-tetrahydrofolate + NH4(+). The glycine cleavage system catalyzes the degradation of glycine. In Geobacillus thermodenitrificans (strain NG80-2), this protein is Aminomethyltransferase.